Here is a 187-residue protein sequence, read N- to C-terminus: MVRYSAAPALETKCAKARGAYLRTHFKNSREVAFTINGMNLKKAFIFLDNVKEHKQAVPFRRFNGGVGRTAQGKEFGVTQARWPVKSVNFFYDLLKNAEANAEAKGLDMDKLIIKHVQVNAAPKQRRRTYRAHGRVTAYLSSPSHIEIIVAEEEEAVPKANDTVSRVSLKQGAKARNLAARKAITSA.

It belongs to the universal ribosomal protein uL22 family. Component of the large ribosomal subunit (LSU). Mature yeast ribosomes consist of a small (40S) and a large (60S) subunit. The 40S small subunit contains 1 molecule of ribosomal RNA (18S rRNA) and at least 33 different proteins. The large 60S subunit contains 3 rRNA molecules (25S, 5.8S and 5S rRNA) and at least 46 different proteins. uL22 is associated with the polypeptide exit tunnel.

The protein localises to the cytoplasm. Its function is as follows. Component of the ribosome, a large ribonucleoprotein complex responsible for the synthesis of proteins in the cell. The small ribosomal subunit (SSU) binds messenger RNAs (mRNAs) and translates the encoded message by selecting cognate aminoacyl-transfer RNA (tRNA) molecules. The large subunit (LSU) contains the ribosomal catalytic site termed the peptidyl transferase center (PTC), which catalyzes the formation of peptide bonds, thereby polymerizing the amino acids delivered by tRNAs into a polypeptide chain. The nascent polypeptides leave the ribosome through a tunnel in the LSU and interact with protein factors that function in enzymatic processing, targeting, and the membrane insertion of nascent chains at the exit of the ribosomal tunnel. In Schizosaccharomyces pombe (strain 972 / ATCC 24843) (Fission yeast), this protein is Large ribosomal subunit protein uL22B (rpl1702).